Here is a 404-residue protein sequence, read N- to C-terminus: Tryptophan synthase beta chain (404 aa).

K94 is subject to N6-(pyridoxal phosphate)lysine.

Belongs to the TrpB family. As to quaternary structure, tetramer of two alpha and two beta chains. Requires pyridoxal 5'-phosphate as cofactor.

The enzyme catalyses (1S,2R)-1-C-(indol-3-yl)glycerol 3-phosphate + L-serine = D-glyceraldehyde 3-phosphate + L-tryptophan + H2O. It functions in the pathway amino-acid biosynthesis; L-tryptophan biosynthesis; L-tryptophan from chorismate: step 5/5. The beta subunit is responsible for the synthesis of L-tryptophan from indole and L-serine. This Staphylococcus aureus (strain MRSA252) protein is Tryptophan synthase beta chain.